The following is a 549-amino-acid chain: Acetyl-coenzyme A transporter 1 (549 aa).

Positions 1 to 12 (MSPTISHKDSSR) are enriched in basic and acidic residues. The interval 1-46 (MSPTISHKDSSRQRRPGNFSHSLDMKSGPLPPGGWDDSHLDSAGRE) is disordered. At 1–74 (MSPTISHKDS…PQSFRAELSS (74 aa)) the chain is on the cytoplasmic side. S22 and S42 each carry phosphoserine. Over residues 36 to 46 (DDSHLDSAGRE) the composition is skewed to basic and acidic residues. A helical transmembrane segment spans residues 75-95 (ILLLLFLYVLQGIPLGLAGSI). Over 96 to 113 (PLILQSKNVSYTDQAFFS) the chain is Extracellular. An N-linked (GlcNAc...) asparagine glycan is attached at N103. Residues 114 to 134 (FVFWPFSLKLLWAPLVDAVYV) form a helical membrane-spanning segment. Residues 135 to 141 (KNFGRRK) lie on the Cytoplasmic side of the membrane. A helical membrane pass occupies residues 142-162 (SWLVPTQYILGLFMIYLSTQV). Residues 163–175 (DRLLGNTDDRTPD) lie on the Extracellular side of the membrane. The chain crosses the membrane as a helical span at residues 176–196 (VIALTVAFFLFEFLAATQDIA). Topologically, residues 197 to 217 (VDGWALTMLSRENVGYASTCN) are cytoplasmic. The helical transmembrane segment at 218–238 (SVGQTAGYFLGNVLFLALESA) threads the bilayer. The Extracellular portion of the chain corresponds to 239–256 (DFCNKYLRFQPQPRGIVT). A helical membrane pass occupies residues 257 to 277 (LSDFLFFWGTVFLITTTLVAL). At 278-299 (LKKENEVSVVKEETQGITDTYK) the chain is on the cytoplasmic side. Residues 300 to 320 (LLFAIIKMPAVLTFCLLILTA) form a helical membrane-spanning segment. Over 321–343 (KIGFSAADAVTGLKLVEEGVPKE) the chain is Extracellular. A helical transmembrane segment spans residues 344-364 (HLALLAVPMVPLQIILPLIIS). Residues 365–378 (KYTAGPQPLNTFYK) lie on the Cytoplasmic side of the membrane. The chain crosses the membrane as a helical span at residues 379 to 398 (AMPYRLLLGLEYALLVWWTP). At 399–404 (KVEHQG) the chain is on the extracellular side. A helical transmembrane segment spans residues 405-425 (GFPIYYYIVVLLSYALHQVTV). At 426–508 (YSMYVSIMAF…LGGSCVTALD (83 aa)) the chain is on the cytoplasmic side. Residues 509-529 (GYYVESIICVFIGFGWWFFLG) traverse the membrane as a helical segment. The Extracellular segment spans residues 530–549 (PKFKKLQDEGSSSWKCKRNN).

The protein belongs to the SLC33A transporter family. As to quaternary structure, homodimerizes. As to expression, ubiquitous. Detected in heart, brain, placenta, lung, liver, skeletal muscle, kidney and pancreas. With strongest signals in pancreas.

Its subcellular location is the endoplasmic reticulum membrane. The catalysed reaction is acetyl-CoA(in) = acetyl-CoA(out). Acetyl-CoA transporter that mediates active acetyl-CoA import through the endoplasmic reticulum (ER) membrane into the ER lumen where specific ER-based acetyl-CoA:lysine acetyltransferases are responsible for the acetylation of ER-based protein substrates, such as BACE1. Necessary for O-acetylation of gangliosides. This chain is Acetyl-coenzyme A transporter 1, found in Homo sapiens (Human).